A 58-amino-acid chain; its full sequence is MLGWTLMFLVVAIIAGLFGFTGIAGAAAGIAKIIFFLFIVLLVISLLVNALKGKAPRA.

The next 2 membrane-spanning stretches (helical) occupy residues 6 to 26 and 28 to 48; these read LMFLVVAIIAGLFGFTGIAGA and AGIAKIIFFLFIVLLVISLLV.

Belongs to the UPF0391 family.

It is found in the cell membrane. The protein is UPF0391 membrane protein Shewmr4_2671 of Shewanella sp. (strain MR-4).